Reading from the N-terminus, the 328-residue chain is Surface antigen CRP170 (328 aa).

Repeats lie at residues 38–102 (NAPC…CKKC) and 103–167 (NAPC…CKKC).

The polypeptide is Surface antigen CRP170 (Giardia intestinalis (Giardia lamblia)).